Reading from the N-terminus, the 313-residue chain is Ribosomal RNA small subunit methyltransferase H (313 aa).

Residues 35–37 (GGH), Asp55, Phe79, Asp101, and Gln108 each bind S-adenosyl-L-methionine.

It belongs to the methyltransferase superfamily. RsmH family.

It localises to the cytoplasm. The enzyme catalyses cytidine(1402) in 16S rRNA + S-adenosyl-L-methionine = N(4)-methylcytidine(1402) in 16S rRNA + S-adenosyl-L-homocysteine + H(+). In terms of biological role, specifically methylates the N4 position of cytidine in position 1402 (C1402) of 16S rRNA. The polypeptide is Ribosomal RNA small subunit methyltransferase H (Escherichia coli O139:H28 (strain E24377A / ETEC)).